A 497-amino-acid polypeptide reads, in one-letter code: Cytochrome P450 monooxygenase opdB (497 aa).

Residues 26–46 (YLGAMAGSVILLISAFTLSLG) traverse the membrane as a helical segment. The disordered stretch occupies residues 69–90 (MSKFTRSRELSQQGEDAAGTEP). Cys-454 serves as a coordination point for heme.

Heme serves as cofactor.

The protein localises to the membrane. It functions in the pathway secondary metabolite biosynthesis. Functionally, cytochrome P450 monooxygenase; part of the gene cluster that mediates the biosynthesis of oxopyrrolidines, polyketide-amino acid hybrid compounds with feature structures of tetramic acid. Does not seem to play a role in oxopyrrolidines A and B biosynthesis. May be involved in further modifications of these oxopyrrolidines. This is Cytochrome P450 monooxygenase opdB from Penicillium oxalicum (strain 114-2 / CGMCC 5302) (Penicillium decumbens).